The primary structure comprises 90 residues: UPF0237 protein MK1213 (90 aa).

Residues 5–79 (VVTVIGADRP…EELGVDVIVQ (75 aa)) form the ACT domain.

It belongs to the UPF0237 family.

The sequence is that of UPF0237 protein MK1213 from Methanopyrus kandleri (strain AV19 / DSM 6324 / JCM 9639 / NBRC 100938).